A 350-amino-acid polypeptide reads, in one-letter code: GTPase Obg (350 aa).

Residues 1 to 175 (MFVDNIRIFA…GVFFMELRRI (175 aa)) enclose the Obg domain. An OBG-type G domain is found at 176–345 (ADAGLVGYPN…LRNRLDELVG (170 aa)). GTP contacts are provided by residues 182–189 (GYPNAGKS), 207–211 (FTTLQ), 229–232 (DIPG), 299–302 (NKMD), and 326–328 (SAL). Mg(2+) is bound by residues serine 189 and threonine 209.

It belongs to the TRAFAC class OBG-HflX-like GTPase superfamily. OBG GTPase family. Monomer. It depends on Mg(2+) as a cofactor.

The protein resides in the cytoplasm. An essential GTPase which binds GTP, GDP and possibly (p)ppGpp with moderate affinity, with high nucleotide exchange rates and a fairly low GTP hydrolysis rate. Plays a role in control of the cell cycle, stress response, ribosome biogenesis and in those bacteria that undergo differentiation, in morphogenesis control. The sequence is that of GTPase Obg from Akkermansia muciniphila (strain ATCC BAA-835 / DSM 22959 / JCM 33894 / BCRC 81048 / CCUG 64013 / CIP 107961 / Muc).